The following is a 234-amino-acid chain: Ponticulin-like protein J (234 aa).

The signal sequence occupies residues 1–20 (MRLLNNLILMVVLFVAVSNA). N-linked (GlcNAc...) asparagine glycosylation is found at Asn19, Asn143, Asn166, and Asn206. The segment at 115-213 (TIKCGTLPPD…SDNETAEGNN (99 aa)) is disordered. Low complexity predominate over residues 154–195 (KSTPKSPSTPKTNNSNEDSDLTTSSSDSSSSTKSSPKSKSST). A lipid anchor (GPI-like-anchor amidated asparagine) is attached at Asn212. Asn213 is a glycosylation site (N-linked (GlcNAc...) asparagine). Positions 213 to 234 (NASSNIATFSLVIISLLVASLF) are cleaved as a propeptide — removed in mature form.

Belongs to the ponticulin family. In terms of processing, the GPI-like-anchor contains a phosphoceramide group, rather than a phosphatidyl group.

The protein resides in the cell membrane. Binds F-actin and nucleates actin assembly. This is Ponticulin-like protein J (ponJ) from Dictyostelium discoideum (Social amoeba).